The chain runs to 292 residues: Diaminopimelate epimerase (292 aa).

The substrate site is built by Asn13, Gln46, and Asn66. The active-site Proton donor is Cys75. Residues 76-77 (GN), Asn166, Asn199, and 217-218 (ER) each bind substrate. Cys226 functions as the Proton acceptor in the catalytic mechanism. Position 227–228 (227–228 (GT)) interacts with substrate.

The protein belongs to the diaminopimelate epimerase family. Homodimer.

It is found in the cytoplasm. The catalysed reaction is (2S,6S)-2,6-diaminopimelate = meso-2,6-diaminopimelate. Its pathway is amino-acid biosynthesis; L-lysine biosynthesis via DAP pathway; DL-2,6-diaminopimelate from LL-2,6-diaminopimelate: step 1/1. Functionally, catalyzes the stereoinversion of LL-2,6-diaminopimelate (L,L-DAP) to meso-diaminopimelate (meso-DAP), a precursor of L-lysine and an essential component of the bacterial peptidoglycan. The polypeptide is Diaminopimelate epimerase (Ralstonia pickettii (strain 12J)).